We begin with the raw amino-acid sequence, 421 residues long: Testin (421 aa).

The 108-residue stretch at 92-199 (MILTNPVAAR…GDVKLPCELD (108 aa)) folds into the PET domain. The tract at residues 134 to 164 (KQPVAGSEGAQYRKKQLAKQLPAHDQDPSKC) is disordered. The span at 155 to 164 (PAHDQDPSKC) shows a compositional bias: basic and acidic residues. 3 consecutive LIM zinc-binding domains span residues 234–297 (YSCY…CDSE), 299–359 (PRCA…NHAV), and 362–421 (QGCH…KMMS).

The protein belongs to the prickle / espinas / testin family. As to quaternary structure, interacts via LIM domain 1 with ZYX. Interacts (via LIM domain 3) with ENAH and VASP. Interacts with ALKBH4, talin, actin, alpha-actinin, GRIP1 and PXN. Interacts (via LIM domain 2) with ACTL7A (via N-terminus). Heterodimer with ACTL7A; the heterodimer interacts with ENAH to form a heterotrimer.

It localises to the cytoplasm. The protein localises to the cell junction. The protein resides in the focal adhesion. Scaffold protein that may play a role in cell adhesion, cell spreading and in the reorganization of the actin cytoskeleton. Plays a role in the regulation of cell proliferation. May act as a tumor suppressor. This is Testin (TES) from Eulemur macaco macaco (Black lemur).